The sequence spans 360 residues: NADP-dependent alcohol dehydrogenase 6 (360 aa).

Position 46 (cysteine 46) interacts with Zn(2+). Residues glycine 47 and histidine 51 each contribute to the NADP(+) site. Residues histidine 68, cysteine 100, cysteine 103, cysteine 106, and cysteine 114 each coordinate Zn(2+). At serine 131 the chain carries Phosphoserine. Cysteine 163 serves as a coordination point for Zn(2+). NADP(+) contacts are provided by leucine 188, glycine 190, isoleucine 191, serine 210, arginine 211, lysine 215, cysteine 250, serine 252, threonine 255, aspartate 256, isoleucine 275, isoleucine 277, tyrosine 298, serine 299, leucine 301, and arginine 348. Position 359 is a phosphoserine (serine 359).

This sequence belongs to the zinc-containing alcohol dehydrogenase family. In terms of assembly, homodimer. It depends on Zn(2+) as a cofactor.

It is found in the cytoplasm. It localises to the nucleus. It carries out the reaction a primary alcohol + NADP(+) = an aldehyde + NADPH + H(+). The enzyme catalyses (E)-cinnamyl alcohol + NADP(+) = (E)-cinnamaldehyde + NADPH + H(+). It catalyses the reaction hexan-1-ol + NADP(+) = hexanal + NADPH + H(+). The catalysed reaction is 3-methylbutanol + NADP(+) = 3-methylbutanal + NADPH + H(+). It carries out the reaction S-nitroso-CoA + NADPH + H(+) = sulfinamide-CoA + NADP(+). Functionally, NADP-dependent, medium-chain alcohol dehydrogenase with a broad substrate specificity. Aldehydes exhibited 50-12000 times higher catalytic efficiency than the corresponding alcohols, therefore the major function of the enzyme is as an aldehyde reductase. The enzyme is active towards aromatic and aliphatic (linear and branched-chain) aldehydes. The enzyme is very active towards aromatic aldehydes, such as cinnamaldehyde, benzaldehyde and substituted benzaldehydes, such as veratraldehyde and panisaldehyde. It exhibits low activity towards substituted cinnamaldehydes, such as coniferaldehyde and sinapaldehyde. The enzyme has no activity with ketones, such as acetone or cyclohexanone. For the reverse reaction, linear and branched-chain primary alcohols are substrates, whereas very low activity is found with secondary alcohols, such as butan-2-ol. The enzyme may be physiologically involved in several steps of the lignin degradation pathway, initiated by other microorganisms, in the synthesis of fusel alcohols, products derived from the aminoacidic metabolism, and in the homeostasis of NADP(H). Has the ability to reduce 5-hydroxymethyl furfural (HMF), a furan derivative which is formed during the hydrolysis of lignocellulosic materials, to 5-hydroxymethylfurfuryl alcohol, thereby alleviating the inhibition of the fermentation of lignocellulose hydrolysates by HMF during fuel ethanol production. Also acts as an inhibitor of protein S-nitrosylation by mediating degradation of S-nitroso-coenzyme A (S-nitroso-CoA), a cofactor required to S-nitrosylate proteins. In Saccharomyces cerevisiae (strain ATCC 204508 / S288c) (Baker's yeast), this protein is NADP-dependent alcohol dehydrogenase 6.